A 119-amino-acid chain; its full sequence is Methylglyoxal synthase (119 aa).

In terms of domain architecture, MGS-like spans 1-119; it reads MKIALIAHDK…KTAELIIKQF (119 aa). Residues His-8, Lys-12, 34–37, and 54–55 each bind substrate; these read TGTT and SG. Asp-60 serves as the catalytic Proton donor/acceptor. His-87 contacts substrate.

It belongs to the methylglyoxal synthase family.

It carries out the reaction dihydroxyacetone phosphate = methylglyoxal + phosphate. Its function is as follows. Catalyzes the formation of methylglyoxal from dihydroxyacetone phosphate. This is Methylglyoxal synthase from Clostridium beijerinckii (strain ATCC 51743 / NCIMB 8052) (Clostridium acetobutylicum).